The following is a 151-amino-acid chain: MKGLKKKRRIQIITLAFVALAGSTALIGYAMRDGINFFRSPTQVVEAPPSETEVFRIGGLVEKGSLVRGQGETVTFRVTDTNATVPVRFTGVLPDLFAEDAGMVGTGRLVDGVFQASEILAKHDETYMPKEVVDALKEQGVFQHTEDQPQG.

The Cytoplasmic portion of the chain corresponds to 1–9; sequence MKGLKKKRR. A helical; Signal-anchor for type II membrane protein membrane pass occupies residues 10–30; sequence IQIITLAFVALAGSTALIGYA. The Periplasmic portion of the chain corresponds to 31–151; the sequence is MRDGINFFRS…FQHTEDQPQG (121 aa). Histidine 123 and tyrosine 127 together coordinate heme.

This sequence belongs to the CcmE/CycJ family.

Its subcellular location is the cell inner membrane. Heme chaperone required for the biogenesis of c-type cytochromes. Transiently binds heme delivered by CcmC and transfers the heme to apo-cytochromes in a process facilitated by CcmF and CcmH. The sequence is that of Cytochrome c-type biogenesis protein CcmE from Cereibacter sphaeroides (strain ATCC 17025 / ATH 2.4.3) (Rhodobacter sphaeroides).